The chain runs to 185 residues: Large ribosomal subunit protein uL6 (185 aa).

It belongs to the universal ribosomal protein uL6 family. In terms of assembly, part of the 50S ribosomal subunit.

In terms of biological role, this protein binds to the 23S rRNA, and is important in its secondary structure. It is located near the subunit interface in the base of the L7/L12 stalk, and near the tRNA binding site of the peptidyltransferase center. The chain is Large ribosomal subunit protein uL6 from Deinococcus deserti (strain DSM 17065 / CIP 109153 / LMG 22923 / VCD115).